A 600-amino-acid chain; its full sequence is ATP-dependent lipid A-core flippase (600 aa).

The next 6 helical transmembrane spans lie at 28 to 48, 80 to 100, 159 to 179, 182 to 202, 267 to 287, and 295 to 315; these read TLSI…IAFI, VMLM…VANF, ALIS…LMFF, WKLS…ISIV, VSQP…LYAA, and ELTA…LQPI. One can recognise an ABC transmembrane type-1 domain in the interval 29–327; sequence LSILGLIVYG…LTRVNAEFQR (299 aa). Positions 359 to 596 constitute an ABC transporter domain; that stretch reads LRFDNVSFSY…KGAYAGLYQM (238 aa). 393-400 provides a ligand contact to ATP; sequence GRSGSGKS.

This sequence belongs to the ABC transporter superfamily. Lipid exporter (TC 3.A.1.106) family. Homodimer.

It localises to the cell inner membrane. The enzyme catalyses ATP + H2O + lipid A-core oligosaccharideSide 1 = ADP + phosphate + lipid A-core oligosaccharideSide 2.. In terms of biological role, involved in lipopolysaccharide (LPS) biosynthesis. Translocates lipid A-core from the inner to the outer leaflet of the inner membrane. Transmembrane domains (TMD) form a pore in the inner membrane and the ATP-binding domain (NBD) is responsible for energy generation. The polypeptide is ATP-dependent lipid A-core flippase (Shewanella denitrificans (strain OS217 / ATCC BAA-1090 / DSM 15013)).